Here is a 175-residue protein sequence, read N- to C-terminus: Nucleoside diphosphate kinase 6 (175 aa).

ATP is bound by residues Lys-15, Phe-63, Arg-91, Thr-97, Arg-111, and Asn-121. The active-site Pros-phosphohistidine intermediate is His-124.

It belongs to the NDK family. Mg(2+) is required as a cofactor.

The enzyme catalyses a 2'-deoxyribonucleoside 5'-diphosphate + ATP = a 2'-deoxyribonucleoside 5'-triphosphate + ADP. The catalysed reaction is a ribonucleoside 5'-diphosphate + ATP = a ribonucleoside 5'-triphosphate + ADP. In terms of biological role, major role in the synthesis of nucleoside triphosphates other than ATP. The ATP gamma phosphate is transferred to the NDP beta phosphate via a ping-pong mechanism, using a phosphorylated active-site intermediate. This is Nucleoside diphosphate kinase 6 (nme6) from Danio rerio (Zebrafish).